We begin with the raw amino-acid sequence, 44 residues long: Photosystem I reaction center subunit IX (44 aa).

Residues 7–27 form a helical membrane-spanning segment; the sequence is YLSVAPVLSTLSLGFLTGFLI.

The protein belongs to the PsaJ family.

It is found in the plastid membrane. In terms of biological role, may help in the organization of the PsaE and PsaF subunits. The sequence is that of Photosystem I reaction center subunit IX from Cuscuta gronovii (Common dodder).